A 117-amino-acid chain; its full sequence is Large ribosomal subunit protein bL19 (117 aa).

Belongs to the bacterial ribosomal protein bL19 family.

This protein is located at the 30S-50S ribosomal subunit interface and may play a role in the structure and function of the aminoacyl-tRNA binding site. In Rhodopirellula baltica (strain DSM 10527 / NCIMB 13988 / SH1), this protein is Large ribosomal subunit protein bL19.